Consider the following 444-residue polypeptide: UDP-N-acetylmuramate--L-alanine ligase (444 aa).

Position 110–116 (110–116 (GAHGKTS)) interacts with ATP.

This sequence belongs to the MurCDEF family.

It localises to the cytoplasm. It carries out the reaction UDP-N-acetyl-alpha-D-muramate + L-alanine + ATP = UDP-N-acetyl-alpha-D-muramoyl-L-alanine + ADP + phosphate + H(+). The protein operates within cell wall biogenesis; peptidoglycan biosynthesis. Functionally, cell wall formation. The polypeptide is UDP-N-acetylmuramate--L-alanine ligase (Streptococcus pneumoniae (strain ATCC 700669 / Spain 23F-1)).